Here is a 155-residue protein sequence, read N- to C-terminus: 6,7-dimethyl-8-ribityllumazine synthase (155 aa).

5-amino-6-(D-ribitylamino)uracil-binding positions include Phe-24, Ala-58 to Glu-60, and Ala-82 to Ile-84. Ser-87–Thr-88 is a (2S)-2-hydroxy-3-oxobutyl phosphate binding site. The Proton donor role is filled by His-90. Phe-115 is a 5-amino-6-(D-ribitylamino)uracil binding site. Arg-129 contacts (2S)-2-hydroxy-3-oxobutyl phosphate.

The protein belongs to the DMRL synthase family.

The enzyme catalyses (2S)-2-hydroxy-3-oxobutyl phosphate + 5-amino-6-(D-ribitylamino)uracil = 6,7-dimethyl-8-(1-D-ribityl)lumazine + phosphate + 2 H2O + H(+). It functions in the pathway cofactor biosynthesis; riboflavin biosynthesis; riboflavin from 2-hydroxy-3-oxobutyl phosphate and 5-amino-6-(D-ribitylamino)uracil: step 1/2. In terms of biological role, catalyzes the formation of 6,7-dimethyl-8-ribityllumazine by condensation of 5-amino-6-(D-ribitylamino)uracil with 3,4-dihydroxy-2-butanone 4-phosphate. This is the penultimate step in the biosynthesis of riboflavin. The chain is 6,7-dimethyl-8-ribityllumazine synthase from Chlorobium luteolum (strain DSM 273 / BCRC 81028 / 2530) (Pelodictyon luteolum).